Consider the following 233-residue polypeptide: 2-C-methyl-D-erythritol 4-phosphate cytidylyltransferase (233 aa).

It belongs to the IspD/TarI cytidylyltransferase family. IspD subfamily.

It carries out the reaction 2-C-methyl-D-erythritol 4-phosphate + CTP + H(+) = 4-CDP-2-C-methyl-D-erythritol + diphosphate. The protein operates within isoprenoid biosynthesis; isopentenyl diphosphate biosynthesis via DXP pathway; isopentenyl diphosphate from 1-deoxy-D-xylulose 5-phosphate: step 2/6. Functionally, catalyzes the formation of 4-diphosphocytidyl-2-C-methyl-D-erythritol from CTP and 2-C-methyl-D-erythritol 4-phosphate (MEP). The protein is 2-C-methyl-D-erythritol 4-phosphate cytidylyltransferase of Vibrio atlanticus (strain LGP32) (Vibrio splendidus (strain Mel32)).